Reading from the N-terminus, the 397-residue chain is Sexual differentiation process protein isp7 (397 aa).

Residues 255 to 353 (PTTSIRLLRY…RYTIPFFLQG (99 aa)) enclose the Fe2OG dioxygenase domain.

This sequence belongs to the iron/ascorbate-dependent oxidoreductase family.

This chain is Sexual differentiation process protein isp7 (isp7), found in Schizosaccharomyces pombe (strain 972 / ATCC 24843) (Fission yeast).